The chain runs to 245 residues: Thiopurine S-methyltransferase (245 aa).

29-40 (WREKWVDGKIGF) provides a ligand contact to S-adenosyl-L-methionine. Phenylalanine 40 is a binding site for substrate. The residue at position 58 (lysine 58) is an N6-acetyllysine. S-adenosyl-L-methionine is bound by residues leucine 69, glutamate 90, and arginine 152.

This sequence belongs to the class I-like SAM-binding methyltransferase superfamily. TPMT family. In terms of assembly, monomer.

It localises to the cytoplasm. The catalysed reaction is S-adenosyl-L-methionine + a thiopurine = S-adenosyl-L-homocysteine + a thiopurine S-methylether.. In Felis catus (Cat), this protein is Thiopurine S-methyltransferase (TPMT).